The sequence spans 23 residues: Cardioactive peptide CAP23 (23 aa).

Cys7 and Cys19 are oxidised to a cystine.

The protein belongs to the GBP/PSP1/paralytic peptide family.

In terms of biological role, has excitatory effects on a semi-isolated heart from larval Manduca sexta, causing an inotropic effect at low concentrations of peptide and chronotropic and inotropic effects at high doses. This Spodoptera eridania (Southern armyworm) protein is Cardioactive peptide CAP23.